The following is a 251-amino-acid chain: Probable transcriptional regulatory protein AAur_2300 (251 aa).

It belongs to the TACO1 family.

It localises to the cytoplasm. This Paenarthrobacter aurescens (strain TC1) protein is Probable transcriptional regulatory protein AAur_2300.